The sequence spans 596 residues: MTSPSPRIQIISTDSAVASPQRIQIVTDQQTGQKIQIVTAVDASGSSKQQFILTSPDGAGTGKVILASPETSSAKQLIFTTSDNLVPGRIQIVTDSASVERLLGKADVQRPQVVEYCVVCGDKASGRHYGAVSCEGCKGFFKRSVRKNLTYSCRSSQDCIINKHHRNRCQFCRLKKCLEMGMKMESVQSERKPFDVQREKPSNCAASTEKIYIRKDLRSPLIATPTFVADKDGARQTGLLDPGMLVNIQQPLIREDGTVLLAADSKAETSQGALGTLANVVTSLANLSESLNNGDASEMQPEDQSASEITRAFDTLAKALNTTDSASPPSLADGIDASGGGSIHVISRDQSTPIIEVEGPLLSDTHVTFKLTMPSPMPEYLNVHYICESASRLLFLSMHWARSIPAFQALGQDCNTSLVRACWNELFTLGLAQCAQVMSLSTILAAIVNHLQNSIQEDKLSGDRIKQVMEHIWKLQEFCNSMAKLDIDGYEYAYLKAIVLFSPDHPGLTGTSQIEKFQEKAQMELQDYVQKTYSEDTYRLARILVRLPALRLMSSNITEELFFTGLIGNVSIDSIIPYILKMETAEYNGQITGASL.

Ser19 carries the phosphoserine; by MAPK modification. The residue at position 46 (Ser46) is a Phosphoserine. 2 positions are modified to phosphoserine; by MAPK: Ser55 and Ser68. Residue Ser98 is modified to Phosphoserine. Residues 114 to 189 (VEYCVVCGDK…MGMKMESVQS (76 aa)) constitute a DNA-binding region (nuclear receptor). NR C4-type zinc fingers lie at residues 117-137 (CVVCGDKASGRHYGAVSCEGC) and 153-177 (CRSSQDCIINKHHRNRCQFCRLKKC). Lys192 participates in a covalent cross-link: Glycyl lysine isopeptide (Lys-Gly) (interchain with G-Cter in SUMO2). Residue Ser219 is modified to Phosphoserine. An N6-acetyllysine modification is found at Lys231. The NR LBD domain occupies 341 to 583 (GSIHVISRDQ…SIIPYILKME (243 aa)).

Belongs to the nuclear hormone receptor family. NR2 subfamily. As to quaternary structure, homodimer; can bind DNA as homodimer. Heterodimer; binds DNA as a heterodimer with NR2C1 required for chromatin remodeling and for binding to promoter regions such as globin DR1 repeats. Interacts with NR2C2AP; the interaction represses selective NR2C2-mediated transcriptional activity. Interacts with PCAF; the interaction preferentially occurs on the non-phosphorylated form and induces NR2C2-mediated transactivation activity and does not require the ligand-binding domain. Interacts (MAPK-mediated phosphorylated form) with NRIP1; the interaction promotes repression of NR2C2-mediated activity. Interacts with NLRP10. Interacts (via ligand-binding region) with transcriptional corepressor JAZF1; the interaction promotes NR2C2-mediated transcriptional repression. Post-translationally, phosphorylation on Ser-19 and Ser-68 is an important regulator of NR2C2-mediated transcriptional activity. Phosphorylation on these residues recruits the corepressor, NRIP1, leading to transcripional repression, whereas the non-phosphorylated form preferentially recruits the coactivator, PCAF. In terms of tissue distribution, expressed, during embryogenesis, in perichondrium, developing glomeruli structures and tubules of kidney, as well as in intestiinal villi. Also expressed in lung and hair follicles.

Its subcellular location is the nucleus. In terms of biological role, orphan nuclear receptor that can act as a repressor or activator of transcription. An important repressor of nuclear receptor signaling pathways such as retinoic acid receptor, retinoid X, vitamin D3 receptor, thyroid hormone receptor and estrogen receptor pathways. May regulate gene expression during the late phase of spermatogenesis. Activates transcriptional activity of LHCG and is antagonist of PPARA-mediated transactivation. Together with NR2C1, forms the core of the DRED (direct repeat erythroid-definitive) complex that represses embryonic and fetal globin transcription including that of GATA1. Binds to hormone response elements (HREs) consisting of two 5'-AGGTCA-3' half site direct repeat consensus sequences. Plays a fundamental role in early embryonic development and embryonic stem cells. Required for normal spermatogenesis and cerebellum development. Appears to be important for neurodevelopmentally regulated behavior. The chain is Nuclear receptor subfamily 2 group C member 2 (Nr2c2) from Mus musculus (Mouse).